Reading from the N-terminus, the 533-residue chain is GMP synthase [glutamine-hydrolyzing] (533 aa).

Positions 25–215 (SIVIFDFGSQ…VFNICKCHAN (191 aa)) constitute a Glutamine amidotransferase type-1 domain. Cysteine 102 serves as the catalytic Nucleophile. Catalysis depends on residues histidine 189 and glutamate 191. The 193-residue stretch at 216-408 (WTMGNYIQES…LGLPDEMIWR (193 aa)) folds into the GMPS ATP-PPase domain. Residue 243–249 (SGGVDSA) participates in ATP binding.

In terms of assembly, homodimer.

The catalysed reaction is XMP + L-glutamine + ATP + H2O = GMP + L-glutamate + AMP + diphosphate + 2 H(+). It participates in purine metabolism; GMP biosynthesis; GMP from XMP (L-Gln route): step 1/1. Functionally, catalyzes the synthesis of GMP from XMP. This is GMP synthase [glutamine-hydrolyzing] from Dehalococcoides mccartyi (strain CBDB1).